The chain runs to 300 residues: Estradiol 17-beta-dehydrogenase 11 (300 aa).

The N-terminal stretch at 1 to 19 is a signal peptide; the sequence is MKFLLDILLLLPLLIVCSL. An NADP(+)-binding site is contributed by 40–64; it reads LITGAGHGIGRLTAYEFAKLKSKLV. Ser-172 provides a ligand contact to substrate. Tyr-185 (proton acceptor) is an active-site residue.

This sequence belongs to the short-chain dehydrogenases/reductases (SDR) family. 17-beta-HSD 3 subfamily. Present at high level in steroidogenic cells such as syncytiotrophoblasts, sebaceous gland, Leydig cells, and granulosa cells of the dominant follicle and corpus luteum. In lung, it is detected in the ciliated epithelium and in acini of adult trachea, in bronchioles, but not in alveoli. In the eye, it is detected in the nonpigmented epithelium of the ciliary body and, at lower level, in the inner nuclear layer of the retina (at protein level). Widely expressed. Highly expressed in retina, pancreas, kidney, liver, lung, adrenal, small intestine, ovary and heart.

It localises to the endoplasmic reticulum. It is found in the lipid droplet. The enzyme catalyses 17beta-estradiol + NAD(+) = estrone + NADH + H(+). The catalysed reaction is 17beta-estradiol + NADP(+) = estrone + NADPH + H(+). Its function is as follows. Can convert androstan-3-alpha,17-beta-diol (3-alpha-diol) to androsterone in vitro, suggesting that it may participate in androgen metabolism during steroidogenesis. May act by metabolizing compounds that stimulate steroid synthesis and/or by generating metabolites that inhibit it. Has no activity toward DHEA (dehydroepiandrosterone), or A-dione (4-androste-3,17-dione), and only a slight activity toward testosterone to A-dione. Tumor-associated antigen in cutaneous T-cell lymphoma. The chain is Estradiol 17-beta-dehydrogenase 11 (HSD17B11) from Homo sapiens (Human).